A 908-amino-acid chain; its full sequence is MRIGLLWLVPLFTLTEGTDGFLQQKNDGRRTKEIVSMVEERHPVHEYEVLLQVTYRDPEEKRELKRFLKLLKSPSPSLRGPSKIIRVKATTYCRSRKGFLECACEDSYTWFPPSCLDPQNCCLHTTGPVPSCNCSLRGLRQSINFCERAKVWGTFEIDEKFPEDLWNSSSDVYAHYTVGIENQLKEAYRRVHGFESVRVTQFRKGSIVVGYEVTGSTSPPELLFAIEQEAEKAQEALRRQFPVKYGSFRVFGKAPCNSISFGFGSENDEYTVPCSSGFTGSMTVRCQSSGWQITRESCVLSQLEELKKELRMIAGKITEAGVASLVQNLSTILLQSPSTTVGNLGSVVSLLSNISSLSLANSLTVSNLTLMNVINIADHILDSASITNWTILLQDAKDASSQLLKTLESISSLIPSMALPLNFSGKFIDWKGTPVTQIQSTRGYNYQMEMRQNASLPIRGHVFIEPDQFQKSHPKTIISMASLTFGDILPITQRGNAWVNGPVISTLIQNYSISEIFLNFSKIKGNLTQPRCVFWDFSQLQWSNAGCQLVNETLDTVLCRCSHLTSFSMLMSPFVPSSVVPVVKWITYIGLSISIASLILCLIIESLFWKQTKRSQTSYTRNICLVNIAVSLLIADVWFIIAATVDPSVSPSGVCVAAVFFTHFFYLAVFFWMLVLGILLAYRIILVFHHMALTTMMAIGFCLGYGCPLLISIITLAVTQPSNSYKRNDVCWLNWSDKSKPLLAFVVPALTIVAVNLVVVLLVLRKLWRPAVGERLNQDDKATAIRMGKSLLVLTPLLGLTWGFGIGTMANSHNLAWHVLFALLNAFQGFFIFCFGILLDTKLRQLLSNKLTTLSSWKQTSKRNASDTVTQPKCLRTFNILQHRGMYALSHTGDSSSDITLTQFLSTE.

An N-terminal signal peptide occupies residues 1 to 20; that stretch reads MRIGLLWLVPLFTLTEGTDG. At 21 to 588 the chain is on the extracellular side; it reads FLQQKNDGRR…VVPVVKWITY (568 aa). Residues Asn-133, Asn-167, Asn-328, Asn-353, Asn-367, Asn-388, Asn-422, Asn-453, Asn-510, Asn-519, Asn-526, and Asn-551 are each glycosylated (N-linked (GlcNAc...) asparagine). The region spanning 147 to 255 is the SEA domain; that stretch reads ERAKVWGTFE…GSFRVFGKAP (109 aa). A GAIN-B domain is found at 434-577; the sequence is PVTQIQSTRG…SMLMSPFVPS (144 aa). Cystine bridges form between Cys-532–Cys-559 and Cys-547–Cys-561. The segment at 532–577 is GPS; the sequence is CVFWDFSQLQWSNAGCQLVNETLDTVLCRCSHLTSFSMLMSPFVPS. A stachel region spans residues 566–574; the sequence is SFSMLMSPF. A helical membrane pass occupies residues 589-609; that stretch reads IGLSISIASLILCLIIESLFW. Over 610 to 622 the chain is Cytoplasmic; sequence KQTKRSQTSYTRN. A helical transmembrane segment spans residues 623–643; that stretch reads ICLVNIAVSLLIADVWFIIAA. Residues 644–658 lie on the Extracellular side of the membrane; sequence TVDPSVSPSGVCVAA. A disulfide bridge connects residues Cys-655 and Cys-731. A helical membrane pass occupies residues 659-679; sequence VFFTHFFYLAVFFWMLVLGIL. Residues 680 to 697 lie on the Cytoplasmic side of the membrane; sequence LAYRIILVFHHMALTTMM. A helical transmembrane segment spans residues 698 to 718; the sequence is AIGFCLGYGCPLLISIITLAV. At 719–742 the chain is on the extracellular side; it reads TQPSNSYKRNDVCWLNWSDKSKPL. Asn-734 carries N-linked (GlcNAc...) asparagine glycosylation. The chain crosses the membrane as a helical span at residues 743-763; it reads LAFVVPALTIVAVNLVVVLLV. The Cytoplasmic segment spans residues 764–789; the sequence is LRKLWRPAVGERLNQDDKATAIRMGK. A helical transmembrane segment spans residues 790 to 810; it reads SLLVLTPLLGLTWGFGIGTMA. Residues 811–818 lie on the Extracellular side of the membrane; the sequence is NSHNLAWH. The chain crosses the membrane as a helical span at residues 819–839; sequence VLFALLNAFQGFFIFCFGILL. At 840-908 the chain is on the cytoplasmic side; that stretch reads DTKLRQLLSN…ITLTQFLSTE (69 aa).

Belongs to the G-protein coupled receptor 2 family. Adhesion G-protein coupled receptor (ADGR) subfamily. In terms of assembly, heterodimer of 2 chains generated by proteolytic processing; the large extracellular N-terminal fragment and the membrane-bound C-terminal fragment predominantly remain associated and non-covalently linked. Autoproteolytically processed at the GPS region of the GAIN-B domain; this cleavage modulates receptor activity. Expressed in liver, kidney and adrenal gland. In kidney strong expression in the renal pelvis and the ureter.

It is found in the cell membrane. Forms a heterodimer of 2 chains generated by proteolytic processing that remain associated through non-covalent interactions mediated by the GAIN-B domain. In the inactivated receptor, the Stachel sequence (also named stalk) is embedded in the GAIN-B domain, where it adopts a beta-strand conformation. On activation, the Stachel moves into the 7 transmembrane region and adopts a twisted hook-shaped configuration that forms contacts within the receptor, leading to coupling of a G-alpha protein, which activates signaling. The cleaved GAIN-B and N-terminal domains can then dissociate from the rest of the receptor. In terms of biological role, adhesion G-protein coupled receptor (aGPCR) for N-docosahexaenoylethanolamine (synaptamide), an omega-3 fatty acid lipid highly enriched in the brain. Ligand binding causes a conformation change that triggers signaling via guanine nucleotide-binding proteins (G proteins) and modulates the activity of downstream effectors, such as adenylate cyclase. ADGRF1 is coupled to G(s) G proteins and mediates activation of adenylate cyclase activity. Also able to couple to G(q), G(i) and G(12)/G(13) G proteins; additional evidence is however required to confirm this result in vivo. Involved in the development of neurons and cognitive function. In liver, involved in fat accumulation. This Mus musculus (Mouse) protein is Adhesion G-protein coupled receptor F1.